We begin with the raw amino-acid sequence, 80 residues long: Dolichol-phosphate mannose synthase subunit 2 (80 aa).

A run of 2 helical transmembrane segments spans residues 10 to 30 (LLLS…VIIL) and 50 to 70 (ILVP…FIGM).

It belongs to the DPM2 family. Component of the dolichol-phosphate mannose (DPM) synthase complex composed of DPMS1, DPMS2 and DPMS3; in the complex interacts directly with DPMS3. Associates with the GPI-GlcNAc transferase (GPI-GnT) complex.

The protein localises to the endoplasmic reticulum membrane. It functions in the pathway protein modification; protein glycosylation. Its function is as follows. Regulates the biosynthesis of dolichol phosphate-mannose. Regulatory subunit of the dolichol-phosphate mannose (DPM) synthase complex; essential for the ER localization and stable expression of DPMS1. The sequence is that of Dolichol-phosphate mannose synthase subunit 2 from Arabidopsis thaliana (Mouse-ear cress).